The chain runs to 304 residues: dTDP-4-dehydrorhamnose reductase (304 aa).

NADH contacts are provided by residues 15 to 17 (GQL), 41 to 42 (DI), and 63 to 65 (AYT). Residues 16 to 17 (QL), 41 to 42 (DI), and 63 to 65 (AYT) contribute to the NADPH site. 104–105 (TD) serves as a coordination point for dTDP-beta-L-rhamnose. 2 residues coordinate NADH: Y132 and K136. NADPH is bound by residues Y132 and K136. The Proton donor/acceptor role is filled by Y132. W157 is a binding site for dTDP-beta-L-rhamnose.

The protein belongs to the dTDP-4-dehydrorhamnose reductase family. Mg(2+) is required as a cofactor.

The enzyme catalyses dTDP-beta-L-rhamnose + NADP(+) = dTDP-4-dehydro-beta-L-rhamnose + NADPH + H(+). Its pathway is carbohydrate biosynthesis; dTDP-L-rhamnose biosynthesis. Involved in the biosynthesis of the dTDP-L-rhamnose which is a component of the critical linker, D-N-acetylglucosamine-L-rhamnose disaccharide, which connects the galactan region of arabinogalactan to peptidoglycan via a phosphodiester linkage. Catalyzes the reduction of dTDP-6-deoxy-L-lyxo-4-hexulose to yield dTDP-L-rhamnose. This is dTDP-4-dehydrorhamnose reductase from Mycobacterium tuberculosis (strain CDC 1551 / Oshkosh).